The chain runs to 125 residues: Holo-[acyl-carrier-protein] synthase (125 aa).

Aspartate 8 and glutamate 57 together coordinate Mg(2+).

It belongs to the P-Pant transferase superfamily. AcpS family. Mg(2+) is required as a cofactor.

It localises to the cytoplasm. It catalyses the reaction apo-[ACP] + CoA = holo-[ACP] + adenosine 3',5'-bisphosphate + H(+). Its function is as follows. Transfers the 4'-phosphopantetheine moiety from coenzyme A to a Ser of acyl-carrier-protein. In Aromatoleum aromaticum (strain DSM 19018 / LMG 30748 / EbN1) (Azoarcus sp. (strain EbN1)), this protein is Holo-[acyl-carrier-protein] synthase.